The following is a 117-amino-acid chain: UPF0342 protein lwe2240 (117 aa).

It belongs to the UPF0342 family.

This chain is UPF0342 protein lwe2240, found in Listeria welshimeri serovar 6b (strain ATCC 35897 / DSM 20650 / CCUG 15529 / CIP 8149 / NCTC 11857 / SLCC 5334 / V8).